The primary structure comprises 206 residues: Uridine kinase (206 aa).

An ATP-binding site is contributed by 9–16 (GGSGSGKT).

It belongs to the uridine kinase family.

It localises to the cytoplasm. The enzyme catalyses uridine + ATP = UMP + ADP + H(+). It catalyses the reaction cytidine + ATP = CMP + ADP + H(+). Its pathway is pyrimidine metabolism; CTP biosynthesis via salvage pathway; CTP from cytidine: step 1/3. It participates in pyrimidine metabolism; UMP biosynthesis via salvage pathway; UMP from uridine: step 1/1. This is Uridine kinase from Borrelia turicatae (strain 91E135).